Reading from the N-terminus, the 495-residue chain is Protein painting of fourth (495 aa).

A disordered region spans residues 1–51; the sequence is MDSKRAALESGDGPDAKRLDTTDDQDKEASGGDGSQVMLAKHVAPYTGHGC. Residues 215-289 form the RRM domain; the sequence is CSLYVGNIPF…RTLTVRYRRL (75 aa). Residues 332 to 342 show a composition bias toward low complexity; that stretch reads ISDSDNCSDSS. Disordered regions lie at residues 332–358, 432–451, and 461–495; these read ISDS…INEQ, PVPA…KKAK, and GPFR…DPDP. A compositionally biased stretch (basic and acidic residues) spans 345 to 358; sequence GKEDGKRKKKINEQ. Residues 351–367 carry the Bipartite nuclear localization signal motif; sequence RKKKINEQEREIEKLKR. The span at 472–495 shows a compositional bias: basic and acidic residues; that stretch reads TADEYEKDDRLEELYAQLERDPDP.

As to quaternary structure, interacts with Zeste. Weakly expressed in embryos. Expression increases during larval and pupal stages. In adults, it is predominantly expressed in males, while it is weakly expressed in females.

The protein localises to the nucleus. It localises to the chromosome. Probable RNA-binding protein that specifically binds to the fourth chromosome and may bind an RNA that spreads the fourth chromosome. May be a reminiscence of X chromosome dosage compensation of ancestral Drosophila species in which the X and the fourth chromosomes are one single chromosome. This chain is Protein painting of fourth (Pof), found in Drosophila melanogaster (Fruit fly).